A 742-amino-acid polypeptide reads, in one-letter code: Catalase-peroxidase (742 aa).

Positions 1-43 (MSDSCPVAHEGNTQSTSESENPVIPSPTPAANRPRNNRDWWPN) are disordered. The span at 11 to 20 (GNTQSTSESE) shows a compositional bias: polar residues. Positions 109–231 (WHAAGTYRIA…LGAVQMGLIY (123 aa)) form a cross-link, tryptophyl-tyrosyl-methioninium (Trp-Tyr) (with M-257). The active-site Proton acceptor is the histidine 110. The segment at residues 231–257 (YVNPEGPNGQPDPLAAARDIRETFSRM) is a cross-link (tryptophyl-tyrosyl-methioninium (Tyr-Met) (with W-109)). Heme b is bound at residue histidine 272.

This sequence belongs to the peroxidase family. Peroxidase/catalase subfamily. In terms of assembly, homodimer or homotetramer. It depends on heme b as a cofactor. In terms of processing, formation of the three residue Trp-Tyr-Met cross-link is important for the catalase, but not the peroxidase activity of the enzyme.

It carries out the reaction H2O2 + AH2 = A + 2 H2O. It catalyses the reaction 2 H2O2 = O2 + 2 H2O. Functionally, bifunctional enzyme with both catalase and broad-spectrum peroxidase activity. The chain is Catalase-peroxidase from Rhodococcus jostii (strain RHA1).